Consider the following 379-residue polypeptide: Multicilin (379 aa).

The segment at 1–129 is necessary and sufficient for its degradation during the cell cycle; the sequence is MQACEGSAAG…AMDDLIADSS (129 aa). Disordered regions lie at residues 26 to 71 and 88 to 107; these read SRRT…APLP and LGTE…PSLQ. A compositionally biased stretch (polar residues) spans 92–107; it reads ASPSGDSSASQNPSLQ. The interval 130–379 is necessary and sufficient for proper nuclear localization; that stretch reads SLMSPPLTNS…GGYKFRWVPS (250 aa). Residues 171-241 are necessary and sufficient for interaction with GMNN and sufficient for homodimerization; sequence PPPTEQYWKE…SVLDKLMITQ (71 aa). Residues 175 to 223 are a coiled coil; it reads EQYWKEVADQNQRALGTALIENNQLHVTLTQKQEEIASLRERNVQLKEL. The span at 291–309 shows a compositional bias: basic and acidic residues; it reads NRDPKRPRLQPEPDSKDCS. The segment at 291 to 312 is disordered; that stretch reads NRDPKRPRLQPEPDSKDCSSRN.

It belongs to the geminin family. As to quaternary structure, heterodimer (via coiled-coil domain) with GMNN (via coiled-coil domain); targets GMNN to the nucleus. Can form homodimers (in vitro, via coiled-coil domain), but these are much less stable than the heterodimer formed with GMNN.

The protein localises to the nucleus. Its function is as follows. Transcription regulator specifically required for multiciliate cell differentiation. Acts in a multiprotein complex containing E2F4 and E2F5 that binds and activates genes required for centriole biogenesis. Required for the deuterosome-mediated acentriolar pathway. Plays a role in mitotic cell cycle progression by promoting cell cycle exit. Modulates GMNN activity by reducing its affinity for CDT1. The chain is Multicilin (Mcidas) from Mus musculus (Mouse).